The chain runs to 466 residues: DNA repair protein RadA (466 aa).

A C4-type zinc finger spans residues Cys12 to Cys29. Residue Gly100 to Ser107 participates in ATP binding. The RadA KNRFG motif signature appears at Lys261–Gly265. The tract at residues Asp359–Gln466 is lon-protease-like.

The protein belongs to the RecA family. RadA subfamily. Interacts with DisA.

DNA-dependent ATPase involved in processing of recombination intermediates, plays a role in repairing DNA breaks. Stimulates the branch migration of RecA-mediated strand transfer reactions, allowing the 3' invading strand to extend heteroduplex DNA faster. Binds ssDNA in the presence of ADP but not other nucleotides, has ATPase activity that is stimulated by ssDNA and various branched DNA structures, but inhibited by SSB. Does not have RecA's homology-searching function. Also inhibits the diadenylate cyclase activity of DisA. This is DNA repair protein RadA from Mycolicibacterium smegmatis (strain ATCC 700084 / mc(2)155) (Mycobacterium smegmatis).